The chain runs to 489 residues: Glutamate--tRNA ligase (489 aa).

A 'HIGH' region motif is present at residues 10–20; the sequence is PSPTGFLHIGG. Positions 261 to 265 match the 'KMSKS' region motif; sequence KLSKR. Lys-264 is an ATP binding site.

This sequence belongs to the class-I aminoacyl-tRNA synthetase family. Glutamate--tRNA ligase type 1 subfamily. As to quaternary structure, monomer.

The protein localises to the cytoplasm. The enzyme catalyses tRNA(Glu) + L-glutamate + ATP = L-glutamyl-tRNA(Glu) + AMP + diphosphate. Catalyzes the attachment of glutamate to tRNA(Glu) in a two-step reaction: glutamate is first activated by ATP to form Glu-AMP and then transferred to the acceptor end of tRNA(Glu). The polypeptide is Glutamate--tRNA ligase (Finegoldia magna (strain ATCC 29328 / DSM 20472 / WAL 2508) (Peptostreptococcus magnus)).